Reading from the N-terminus, the 467-residue chain is Replication factor C large subunit (467 aa).

ATP is bound at residue 47 to 54; that stretch reads GPPGVGKT.

This sequence belongs to the activator 1 small subunits family. RfcL subfamily. In terms of assembly, heteromultimer composed of small subunits (RfcS) and large subunits (RfcL).

Functionally, part of the RFC clamp loader complex which loads the PCNA sliding clamp onto DNA. This Methanothrix thermoacetophila (strain DSM 6194 / JCM 14653 / NBRC 101360 / PT) (Methanosaeta thermophila) protein is Replication factor C large subunit.